The following is a 481-amino-acid chain: Glutamate--tRNA ligase (481 aa).

The short motif at 28-38 is the 'HIGH' region element; sequence PSPTGFLHLGG. A compositionally biased stretch (basic and acidic residues) spans 139-148; the sequence is RYDGTWRPEP. A disordered region spans residues 139-159; that stretch reads RYDGTWRPEPGKTLPPVPADR. Residues 260–264 carry the 'KMSKS' region motif; the sequence is KLSKR. Lysine 263 contacts ATP.

It belongs to the class-I aminoacyl-tRNA synthetase family. Glutamate--tRNA ligase type 1 subfamily. As to quaternary structure, monomer.

The protein resides in the cytoplasm. It catalyses the reaction tRNA(Glu) + L-glutamate + ATP = L-glutamyl-tRNA(Glu) + AMP + diphosphate. In terms of biological role, catalyzes the attachment of glutamate to tRNA(Glu) in a two-step reaction: glutamate is first activated by ATP to form Glu-AMP and then transferred to the acceptor end of tRNA(Glu). The chain is Glutamate--tRNA ligase from Bordetella bronchiseptica (strain ATCC BAA-588 / NCTC 13252 / RB50) (Alcaligenes bronchisepticus).